A 367-amino-acid polypeptide reads, in one-letter code: Zinc finger CCCH domain-containing protein 56 (367 aa).

Positions 38 to 80 are disordered; that stretch reads YNSQWNADGGGGGSSRAGSEQPPPGKKSRGGGGGEGGGNTSKS. Over residues 67-76 the composition is skewed to gly residues; the sequence is GGGGGEGGGN. 3 C3H1-type zinc fingers span residues 87 to 114, 169 to 197, and 245 to 273; these read FFKT…HGME, AYKG…HDEQ, and NWKT…HGAA.

The protein is Zinc finger CCCH domain-containing protein 56 of Oryza sativa subsp. japonica (Rice).